The primary structure comprises 256 residues: MLIVISPAKNLDYDSPVPTAKSTKAALLDDASELMDGLKTLAPQDVSQLMGISDKLGLLNYDRFQDWQLPLTKKNARQALLAFKGDVYVGLDAYNFSAEDFDFAQQHLRILSGLYGVLKPLDLVAPYRLEMGTRFANDRGKDLYAFWGDKVTAELNKPIKKLASNTLINLASNEYFKSVKPAHLQAQIITPVFKDWKNGTYKIISFFAKKARGRMSAYIIKNQITDPELIKQFDWDGYQYNSAMSDAGQWVFTRKQ.

It belongs to the UPF0246 family.

The chain is UPF0246 protein TERTU_4575 from Teredinibacter turnerae (strain ATCC 39867 / T7901).